The primary structure comprises 401 residues: Imidazolonepropionase (401 aa).

The Fe(3+) site is built by histidine 70 and histidine 72. Positions 70 and 72 each coordinate Zn(2+). Arginine 79, tyrosine 142, and histidine 175 together coordinate 4-imidazolone-5-propanoate. An N-formimidoyl-L-glutamate-binding site is contributed by tyrosine 142. Residue histidine 238 coordinates Fe(3+). A Zn(2+)-binding site is contributed by histidine 238. Residue glutamine 241 coordinates 4-imidazolone-5-propanoate. Position 313 (aspartate 313) interacts with Fe(3+). Aspartate 313 is a Zn(2+) binding site. N-formimidoyl-L-glutamate-binding residues include asparagine 315 and glycine 317. Threonine 318 provides a ligand contact to 4-imidazolone-5-propanoate.

The protein belongs to the metallo-dependent hydrolases superfamily. HutI family. Zn(2+) serves as cofactor. Fe(3+) is required as a cofactor.

Its subcellular location is the cytoplasm. It carries out the reaction 4-imidazolone-5-propanoate + H2O = N-formimidoyl-L-glutamate. Its pathway is amino-acid degradation; L-histidine degradation into L-glutamate; N-formimidoyl-L-glutamate from L-histidine: step 3/3. Functionally, catalyzes the hydrolytic cleavage of the carbon-nitrogen bond in imidazolone-5-propanoate to yield N-formimidoyl-L-glutamate. It is the third step in the universal histidine degradation pathway. This is Imidazolonepropionase from Xanthomonas campestris pv. campestris (strain 8004).